We begin with the raw amino-acid sequence, 427 residues long: Enolase (427 aa).

Q163 contributes to the (2R)-2-phosphoglycerate binding site. Catalysis depends on E205, which acts as the Proton donor. Mg(2+) is bound by residues D242, E285, and D312. 4 residues coordinate (2R)-2-phosphoglycerate: K337, R366, S367, and K388. K337 acts as the Proton acceptor in catalysis.

Belongs to the enolase family. Requires Mg(2+) as cofactor.

It is found in the cytoplasm. The protein resides in the secreted. It localises to the cell surface. It catalyses the reaction (2R)-2-phosphoglycerate = phosphoenolpyruvate + H2O. The protein operates within carbohydrate degradation; glycolysis; pyruvate from D-glyceraldehyde 3-phosphate: step 4/5. Catalyzes the reversible conversion of 2-phosphoglycerate (2-PG) into phosphoenolpyruvate (PEP). It is essential for the degradation of carbohydrates via glycolysis. In Azorhizobium caulinodans (strain ATCC 43989 / DSM 5975 / JCM 20966 / LMG 6465 / NBRC 14845 / NCIMB 13405 / ORS 571), this protein is Enolase.